Reading from the N-terminus, the 201-residue chain is Large ribosomal subunit protein uL4 (201 aa).

Residues 44–71 form a disordered region; sequence RAQKTRAEVTGSGKKPWRQKGTGRARSG.

Belongs to the universal ribosomal protein uL4 family. Part of the 50S ribosomal subunit.

One of the primary rRNA binding proteins, this protein initially binds near the 5'-end of the 23S rRNA. It is important during the early stages of 50S assembly. It makes multiple contacts with different domains of the 23S rRNA in the assembled 50S subunit and ribosome. Its function is as follows. Forms part of the polypeptide exit tunnel. The chain is Large ribosomal subunit protein uL4 from Edwardsiella ictaluri (strain 93-146).